The primary structure comprises 55 residues: Riparin-1.5 acid (55 aa).

Positions Met1–Ala15 are cleaved as a signal peptide. A propeptide spanning residues Gln16 to Arg41 is cleaved from the precursor. A disulfide bridge links Cys47 with Cys53. Residues Asn54–His55 constitute a propeptide that is removed on maturation.

Expressed by the skin glands.

Its subcellular location is the secreted. This is Riparin-1.5 acid from Crinia riparia (Streambank froglet).